The following is a 279-amino-acid chain: Large ribosomal subunit protein uL2 (279 aa).

2 disordered regions span residues 29–49 (PVKQ…NGRV) and 202–279 (NASI…KKKG). Residues 36 to 49 (GKSSSGGRNNNGRV) show a composition bias toward low complexity. Positions 209-220 (GRSRWLGRRPHN) are enriched in basic residues.

The protein belongs to the universal ribosomal protein uL2 family. Part of the 50S ribosomal subunit. Forms a bridge to the 30S subunit in the 70S ribosome.

Functionally, one of the primary rRNA binding proteins. Required for association of the 30S and 50S subunits to form the 70S ribosome, for tRNA binding and peptide bond formation. It has been suggested to have peptidyltransferase activity; this is somewhat controversial. Makes several contacts with the 16S rRNA in the 70S ribosome. In Beijerinckia indica subsp. indica (strain ATCC 9039 / DSM 1715 / NCIMB 8712), this protein is Large ribosomal subunit protein uL2.